Consider the following 165-residue polypeptide: Methylated-DNA--protein-cysteine methyltransferase (165 aa).

Residue Cys126 is the Nucleophile; methyl group acceptor of the active site.

The protein belongs to the MGMT family.

The protein resides in the cytoplasm. The enzyme catalyses a 6-O-methyl-2'-deoxyguanosine in DNA + L-cysteinyl-[protein] = S-methyl-L-cysteinyl-[protein] + a 2'-deoxyguanosine in DNA. It catalyses the reaction a 4-O-methyl-thymidine in DNA + L-cysteinyl-[protein] = a thymidine in DNA + S-methyl-L-cysteinyl-[protein]. Its function is as follows. Involved in the cellular defense against the biological effects of O6-methylguanine (O6-MeG) and O4-methylthymine (O4-MeT) in DNA. Repairs the methylated nucleobase in DNA by stoichiometrically transferring the methyl group to a cysteine residue in the enzyme. This is a suicide reaction: the enzyme is irreversibly inactivated. This chain is Methylated-DNA--protein-cysteine methyltransferase, found in Mycobacterium bovis (strain ATCC BAA-935 / AF2122/97).